Reading from the N-terminus, the 351-residue chain is L-threonine 3-dehydrogenase (351 aa).

Residue Cys39 coordinates Zn(2+). Residues Thr41 and His44 each act as charge relay system in the active site. Residues His64, Glu65, Cys94, Cys97, Cys100, and Cys108 each contribute to the Zn(2+) site. NAD(+) is bound by residues Ile176, Asp196, Arg201, 271–273 (LGI), and 295–296 (IY).

This sequence belongs to the zinc-containing alcohol dehydrogenase family. Homotetramer. Requires Zn(2+) as cofactor.

Its subcellular location is the cytoplasm. It catalyses the reaction L-threonine + NAD(+) = (2S)-2-amino-3-oxobutanoate + NADH + H(+). The protein operates within amino-acid degradation; L-threonine degradation via oxydo-reductase pathway; glycine from L-threonine: step 1/2. Functionally, catalyzes the NAD(+)-dependent oxidation of L-threonine to 2-amino-3-ketobutyrate. In Francisella tularensis subsp. mediasiatica (strain FSC147), this protein is L-threonine 3-dehydrogenase.